Consider the following 433-residue polypeptide: Ornithine decarboxylase 1B, chloroplastic (433 aa).

Lys96 bears the N6-(pyridoxal phosphate)lysine mark. Residues Ser228, Gly266, and 299–302 (EPGR) each bind pyridoxal 5'-phosphate. 342 to 343 (YD) lines the substrate pocket. Catalysis depends on Cys378, which acts as the Proton donor; shared with dimeric partner. Asp379 is a binding site for substrate. Tyr407 serves as a coordination point for pyridoxal 5'-phosphate.

Belongs to the Orn/Lys/Arg decarboxylase class-II family. In terms of assembly, homodimer. Only the dimer is catalytically active, as the active sites are constructed of residues from both monomers. The cofactor is pyridoxal 5'-phosphate.

It localises to the plastid. It is found in the chloroplast. The catalysed reaction is L-ornithine + H(+) = putrescine + CO2. The protein operates within alkaloid biosynthesis; nicotine biosynthesis. It participates in amine and polyamine biosynthesis; putrescine biosynthesis via L-ornithine pathway; putrescine from L-ornithine: step 1/1. Involved in the biosynthesis of pyridine alkaloid natural products, leading mainly to the production of anabasine, anatabine, nicotine and nornicotine, effective deterrents against herbivores with antiparasitic and pesticide properties (neurotoxins); nornicotine serves as the precursor in the synthesis of the carcinogen compound N'-nitrosonornicotine (NNN). Catalyzes the first and rate-limiting step of polyamine biosynthesis that converts ornithine into putrescine, which is the precursor for the polyamines, spermidine and spermine. Polyamines are essential for cell proliferation and are implicated in cellular processes, ranging from DNA replication to apoptosis. In Nicotiana tabacum (Common tobacco), this protein is Ornithine decarboxylase 1B, chloroplastic.